The sequence spans 317 residues: Transaldolase (317 aa).

Lys132 functions as the Schiff-base intermediate with substrate in the catalytic mechanism.

Belongs to the transaldolase family. Type 1 subfamily.

The protein localises to the cytoplasm. The enzyme catalyses D-sedoheptulose 7-phosphate + D-glyceraldehyde 3-phosphate = D-erythrose 4-phosphate + beta-D-fructose 6-phosphate. It participates in carbohydrate degradation; pentose phosphate pathway; D-glyceraldehyde 3-phosphate and beta-D-fructose 6-phosphate from D-ribose 5-phosphate and D-xylulose 5-phosphate (non-oxidative stage): step 2/3. Functionally, transaldolase is important for the balance of metabolites in the pentose-phosphate pathway. In Haemophilus influenzae (strain ATCC 51907 / DSM 11121 / KW20 / Rd), this protein is Transaldolase.